The primary structure comprises 498 residues: ATP synthase subunit beta, chloroplastic (498 aa).

Residue 172–179 (GGAGVGKT) coordinates ATP.

The protein belongs to the ATPase alpha/beta chains family. In terms of assembly, F-type ATPases have 2 components, CF(1) - the catalytic core - and CF(0) - the membrane proton channel. CF(1) has five subunits: alpha(3), beta(3), gamma(1), delta(1), epsilon(1). CF(0) has four main subunits: a(1), b(1), b'(1) and c(9-12).

Its subcellular location is the plastid. The protein resides in the chloroplast thylakoid membrane. The catalysed reaction is ATP + H2O + 4 H(+)(in) = ADP + phosphate + 5 H(+)(out). In terms of biological role, produces ATP from ADP in the presence of a proton gradient across the membrane. The catalytic sites are hosted primarily by the beta subunits. The protein is ATP synthase subunit beta, chloroplastic of Nypa fruticans (Nypa palm).